Consider the following 296-residue polypeptide: Testis-expressed protein 26 (296 aa).

5 mn regions span residues 30–42, 69–83, 140–153, 175–189, and 229–243; these read ATTM…PKRG, ESQY…LRSK, ISCT…LTQS, DTEF…AQIP, and QTTY…CLDF.

This is Testis-expressed protein 26 (Tex26) from Mus musculus (Mouse).